The following is a 198-amino-acid chain: ATP-dependent Clp protease proteolytic subunit 1 (198 aa).

S98 acts as the Nucleophile in catalysis. Residue H123 is part of the active site.

Belongs to the peptidase S14 family. In terms of assembly, fourteen ClpP subunits assemble into 2 heptameric rings which stack back to back to give a disk-like structure with a central cavity, resembling the structure of eukaryotic proteasomes.

It localises to the cytoplasm. The catalysed reaction is Hydrolysis of proteins to small peptides in the presence of ATP and magnesium. alpha-casein is the usual test substrate. In the absence of ATP, only oligopeptides shorter than five residues are hydrolyzed (such as succinyl-Leu-Tyr-|-NHMec, and Leu-Tyr-Leu-|-Tyr-Trp, in which cleavage of the -Tyr-|-Leu- and -Tyr-|-Trp bonds also occurs).. Its function is as follows. Cleaves peptides in various proteins in a process that requires ATP hydrolysis. Has a chymotrypsin-like activity. Plays a major role in the degradation of misfolded proteins. The sequence is that of ATP-dependent Clp protease proteolytic subunit 1 from Leptospira interrogans serogroup Icterohaemorrhagiae serovar copenhageni (strain Fiocruz L1-130).